The sequence spans 333 residues: MTAPENLDAALRPKTLTEYVGQEKLKDKLGVYLQAARGRREALDHTLLFGPPGLGKTTLAHIIAYELGVNIRVTSGPAIEKPGDLAAILTNSLEEGDVLFIDEIHRLGRVAEEHLYPAMEDFKLDIVLGQGPAARTIELPLPRFTLVGATTRPGLITAPMRSRFGIIEHLEYYTAEEIATNLLRDARLLGFGLDEEAGLEIGARSRGTMRIAKRLLRRVRDYADVAGETTIGLERAQSALDKLGLDSAGLDDRDKKYLETLIHRFAGGPVGVDTLATAISEDALTLEDVYEPYLIQLGFIKRTPRGRVATAHAYDHLGLPPGGIDDGNGIFLN.

The interval 1–173 is large ATPase domain (RuvB-L); sequence MTAPENLDAA…FGIIEHLEYY (173 aa). ATP is bound by residues Leu11, Arg12, Gly53, Lys56, Thr57, Thr58, 120-122, Arg163, Tyr173, and Arg210; that span reads EDF. A Mg(2+)-binding site is contributed by Thr57. Residues 174–244 form a small ATPAse domain (RuvB-S) region; sequence TAEEIATNLL…RAQSALDKLG (71 aa). The interval 247–333 is head domain (RuvB-H); the sequence is SAGLDDRDKK…IDDGNGIFLN (87 aa). Residues Arg302 and Arg307 each contribute to the DNA site.

Belongs to the RuvB family. Homohexamer. Forms an RuvA(8)-RuvB(12)-Holliday junction (HJ) complex. HJ DNA is sandwiched between 2 RuvA tetramers; dsDNA enters through RuvA and exits via RuvB. An RuvB hexamer assembles on each DNA strand where it exits the tetramer. Each RuvB hexamer is contacted by two RuvA subunits (via domain III) on 2 adjacent RuvB subunits; this complex drives branch migration. In the full resolvosome a probable DNA-RuvA(4)-RuvB(12)-RuvC(2) complex forms which resolves the HJ.

It is found in the cytoplasm. The catalysed reaction is ATP + H2O = ADP + phosphate + H(+). Functionally, the RuvA-RuvB-RuvC complex processes Holliday junction (HJ) DNA during genetic recombination and DNA repair, while the RuvA-RuvB complex plays an important role in the rescue of blocked DNA replication forks via replication fork reversal (RFR). RuvA specifically binds to HJ cruciform DNA, conferring on it an open structure. The RuvB hexamer acts as an ATP-dependent pump, pulling dsDNA into and through the RuvAB complex. RuvB forms 2 homohexamers on either side of HJ DNA bound by 1 or 2 RuvA tetramers; 4 subunits per hexamer contact DNA at a time. Coordinated motions by a converter formed by DNA-disengaged RuvB subunits stimulates ATP hydrolysis and nucleotide exchange. Immobilization of the converter enables RuvB to convert the ATP-contained energy into a lever motion, pulling 2 nucleotides of DNA out of the RuvA tetramer per ATP hydrolyzed, thus driving DNA branch migration. The RuvB motors rotate together with the DNA substrate, which together with the progressing nucleotide cycle form the mechanistic basis for DNA recombination by continuous HJ branch migration. Branch migration allows RuvC to scan DNA until it finds its consensus sequence, where it cleaves and resolves cruciform DNA. The polypeptide is Holliday junction branch migration complex subunit RuvB (Deinococcus radiodurans (strain ATCC 13939 / DSM 20539 / JCM 16871 / CCUG 27074 / LMG 4051 / NBRC 15346 / NCIMB 9279 / VKM B-1422 / R1)).